The sequence spans 303 residues: Acetaldehyde dehydrogenase 1 (303 aa).

C130 serves as the catalytic Acyl-thioester intermediate. Residues 161-169 and N272 contribute to the NAD(+) site; that span reads SVGPGTRKN.

Belongs to the acetaldehyde dehydrogenase family.

It catalyses the reaction acetaldehyde + NAD(+) + CoA = acetyl-CoA + NADH + H(+). The chain is Acetaldehyde dehydrogenase 1 from Methylibium petroleiphilum (strain ATCC BAA-1232 / LMG 22953 / PM1).